We begin with the raw amino-acid sequence, 432 residues long: Amino-acid acetyltransferase (432 aa).

The region spanning 286 to 425 (EQLREAGIED…ASLYNFQRNS (140 aa)) is the N-acetyltransferase domain.

Belongs to the acetyltransferase family. ArgA subfamily.

The protein localises to the cytoplasm. The enzyme catalyses L-glutamate + acetyl-CoA = N-acetyl-L-glutamate + CoA + H(+). The protein operates within amino-acid biosynthesis; L-arginine biosynthesis; N(2)-acetyl-L-ornithine from L-glutamate: step 1/4. This is Amino-acid acetyltransferase from Pseudomonas paraeruginosa (strain DSM 24068 / PA7) (Pseudomonas aeruginosa (strain PA7)).